The chain runs to 343 residues: Malate dehydrogenase, peroxisomal (343 aa).

NAD(+) contacts are provided by residues 8–14 (GASGGVG) and D34. Substrate contacts are provided by R80 and R86. NAD(+) is bound by residues N93 and 116 to 118 (ISN). Substrate contacts are provided by N118 and R152. The Proton acceptor role is filled by H187. Position 237 (M237) interacts with NAD(+).

It belongs to the LDH/MDH superfamily. MDH type 1 family. Homodimer.

It is found in the peroxisome. The enzyme catalyses (S)-malate + NAD(+) = oxaloacetate + NADH + H(+). This chain is Malate dehydrogenase, peroxisomal (MDH3), found in Saccharomyces cerevisiae (strain ATCC 204508 / S288c) (Baker's yeast).